The chain runs to 318 residues: Methionyl-tRNA formyltransferase (318 aa).

112–115 (SILP) contacts (6S)-5,6,7,8-tetrahydrofolate.

This sequence belongs to the Fmt family.

It carries out the reaction L-methionyl-tRNA(fMet) + (6R)-10-formyltetrahydrofolate = N-formyl-L-methionyl-tRNA(fMet) + (6S)-5,6,7,8-tetrahydrofolate + H(+). Attaches a formyl group to the free amino group of methionyl-tRNA(fMet). The formyl group appears to play a dual role in the initiator identity of N-formylmethionyl-tRNA by promoting its recognition by IF2 and preventing the misappropriation of this tRNA by the elongation apparatus. The polypeptide is Methionyl-tRNA formyltransferase (Haemophilus influenzae (strain PittEE)).